A 189-amino-acid chain; its full sequence is uncharacterized protein (189 aa).

The 174-residue stretch at 1–174 (MKCWTLGDRV…GMEKGVREAL (174 aa)) folds into the Macro domain.

This is an uncharacterized protein from Aeropyrum pernix (strain ATCC 700893 / DSM 11879 / JCM 9820 / NBRC 100138 / K1).